Here is a 461-residue protein sequence, read N- to C-terminus: Decaprenylphosphoryl-beta-D-ribose oxidase (461 aa).

Residues 19 to 194 (TAPSVANVLR…MRATIEMTPT (176 aa)) enclose the FAD-binding PCMH-type domain. Residues 53-63 (ARGLGRSYGDN), Gly-117, 122-125 (TVGG), 129-132 (CDIH), Ile-184, and Tyr-415 contribute to the FAD site.

Belongs to the DprE1 family. Monomer. Although forming apparent dimer in crystals, DprE1 does not dimerize appreciably in solution. Interacts with DprE2 to form an epimerase complex.

Its subcellular location is the periplasm. It carries out the reaction trans,octa-cis-decaprenylphospho-beta-D-ribofuranose + FAD + H(+) = trans,octa-cis-decaprenylphospho-beta-D-erythro-pentofuranosid-2-ulose + FADH2. It participates in cell wall biogenesis; cell wall polysaccharide biosynthesis. Is inhibited by 8-nitro-benzothiazinones (BTZs) such as BTZ043 and PBTZ169; BTZs are a new class of antimycobacterial agents that kill M.tuberculosis in vitro, ex vivo, and in mouse models of tuberculosis. Is also inhibited by dinitrobenzamide derivatives (DNBs), which thus block formation of both cell-wall lipoarabinomannan and arabinogalactan via inhibition of decaprenyl-phospho-arabinose (DPA) synthesis; DNBs show high activity against intracellular growth of M.tuberculosis inside macrophages, including extensively drug resistant (XDR) strains. BTZs and DNBs are suicide inhibitors that act via covalent modification of DprE1; the essential nitro group of these compounds is reduced by DprE1 to a nitroso group, which then specifically reacts with Cys-387 of DprE1 to form an irreversible semimercaptal adduct. Many other compounds with diverse scaffolds were found to act as either covalent (e.g. nitroquinoxalines, nitroimidazoles) or non-covalent (e.g. the benzothiazole derivative TCA1, the 2-carboxyquinoxaline Ty38C, 8-pyrrole-benzothiazinones, 1,4-azaindoles, pyrazolopyridones, 4-aminoquinolone piperidine amides) DprE1 inhibitors. Functionally, component of the DprE1-DprE2 complex that catalyzes the 2-step epimerization of decaprenyl-phospho-ribose (DPR) to decaprenyl-phospho-arabinose (DPA), a key precursor that serves as the arabinose donor required for the synthesis of cell-wall arabinans. DprE1 catalyzes the first step of epimerization, namely FAD-dependent oxidation of the C2' hydroxyl of DPR to yield the keto intermediate decaprenyl-phospho-2'-keto-D-arabinose (DPX). The intermediate DPX is then transferred to DprE2 subunit of the epimerase complex, most probably through a 'substrate channel' at the interface of DprE1-DprE2 complex. Can also use farnesyl-phosphoryl-beta-D-ribofuranose (FPR) as substrate in vitro. In terms of biological role, dprE1 is a highly vulnerable and fully validated tuberculosis drug target. The protein is Decaprenylphosphoryl-beta-D-ribose oxidase of Mycobacterium tuberculosis (strain CDC 1551 / Oshkosh).